The sequence spans 447 residues: MATTFLQTSSTFGSGSTRGGSLRVGGGSFGGGSLYGGGGSRSISASSARFVSSGAGVGFGGGMSCGFGGGFGGGFGGGFGDFGGGDGGLLSGNEKVTMQNLNDRLASYLDKVRALEEANTELEVKIRDWYQKQSPASPDRDYSHYFKTMEEIRDKILAATIDNSRVILEIDNARLAADDFRLKYENELALRQGVEADINGLRRVLDELTLARTDLEMQIEQLNEELAYLKKNHEEEMKEFSSQLAGQVNVEMDAAPGVDLTRMLAEMREQYEAIAEKNRRDVEAWFFSKTEELNKEVASNTEMIQTSKTEITDLRRTLQGLEIELQSQLSMKAGLENSLAEVECRYATQLQQIQGLITGLETQLSELRCEMEAQNQEYNMLLDIKTRLEQEISTYRNLLEGQDAKMAAIGVREASLRGGSSGGGSNFHISVEESVDGKVVSSRKRES.

Positions 1–93 (MATTFLQTSS…GGDGGLLSGN (93 aa)) are head. Residues Ser-16, Ser-28, Ser-33, and Ser-47 each carry the phosphoserine modification. The interval 94–129 (EKVTMQNLNDRLASYLDKVRALEEANTELEVKIRDW) is coil 1A. Positions 94-406 (EKVTMQNLND…NLLEGQDAKM (313 aa)) constitute an IF rod domain. Residue Thr-120 is modified to Phosphothreonine. The linker 1 stretch occupies residues 130 to 148 (YQKQSPASPDRDYSHYFKT). The segment at 149 to 240 (MEEIRDKILA…KNHEEEMKEF (92 aa)) is coil 1B. The linker 12 stretch occupies residues 241–260 (SSQLAGQVNVEMDAAPGVDL). Positions 261–402 (TRMLAEMREQ…STYRNLLEGQ (142 aa)) are coil 2. Residue Lys-289 forms a Glycyl lysine isopeptide (Lys-Gly) (interchain with G-Cter in SUMO2) linkage. Residues Thr-290 and Thr-312 each carry the phosphothreonine modification. Positions 403–447 (DAKMAAIGVREASLRGGSSGGGSNFHISVEESVDGKVVSSRKRES) are tail. Lys-438 participates in a covalent cross-link: Glycyl lysine isopeptide (Lys-Gly) (interchain with G-Cter in SUMO1); alternate. A Glycyl lysine isopeptide (Lys-Gly) (interchain with G-Cter in SUMO2); alternate cross-link involves residue Lys-438.

This sequence belongs to the intermediate filament family. Heterotetramer of two type I and two type II keratins. Forms a heterodimer with KRT14. Interacts with NOD2.

This Rattus norvegicus (Rat) protein is Keratin, type I cytoskeletal 15.